Reading from the N-terminus, the 308-residue chain is tRNA pseudouridine synthase B (308 aa).

Asp47 serves as the catalytic Nucleophile.

The protein belongs to the pseudouridine synthase TruB family. Type 1 subfamily.

The enzyme catalyses uridine(55) in tRNA = pseudouridine(55) in tRNA. Functionally, responsible for synthesis of pseudouridine from uracil-55 in the psi GC loop of transfer RNAs. The chain is tRNA pseudouridine synthase B from Xanthomonas axonopodis pv. citri (strain 306).